The sequence spans 636 residues: Molybdenum cofactor biosynthesis protein 1 (636 aa).

Residues 1 to 383 are molybdenum cofactor biosynthesis protein A; the sequence is MAARPLSRML…QMKNRPMILI (383 aa). Serine 64 carries the post-translational modification Phosphoserine. A Radical SAM core domain is found at 64-277; the sequence is SFGRQHSYLR…LDTVRQQWPE (214 aa). Position 73 (arginine 73) interacts with GTP. The [4Fe-4S] cluster site is built by cysteine 80 and cysteine 84. S-adenosyl-L-methionine is bound at residue tyrosine 86. Cysteine 87 lines the [4Fe-4S] cluster pocket. Arginine 123 contributes to the GTP binding site. Glycine 127 serves as a coordination point for S-adenosyl-L-methionine. A GTP-binding site is contributed by threonine 154. Residue serine 178 coordinates S-adenosyl-L-methionine. N6-acetyllysine is present on lysine 198. Residue lysine 215 coordinates GTP. Methionine 249 serves as a coordination point for S-adenosyl-L-methionine. [4Fe-4S] cluster contacts are provided by cysteine 312 and cysteine 315. Residue 317-319 coordinates GTP; sequence RLR. Cysteine 329 is a binding site for [4Fe-4S] cluster. The molybdenum cofactor biosynthesis protein C stretch occupies residues 414–636; sequence MSFSSQVATL…GGQRGDFHRA (223 aa). The segment at 456 to 480 is disordered; it reads DANSKCLSPGSWASAAPSGPQLTSE. Low complexity predominate over residues 463-475; it reads SPGSWASAAPSGP. Lysine 528 is subject to N6-acetyllysine. Aspartate 606 (for molybdenum cofactor biosynthesis protein C activity) is an active-site residue.

In the C-terminal section; belongs to the MoaC family. It in the N-terminal section; belongs to the radical SAM superfamily. MoaA family. As to quaternary structure, isoform MOCS1A and isoform MOCS1B probably form a heterooligomer. The cofactor is [4Fe-4S] cluster. Isoform MOCS1A and isoform 2 are widely expressed.

The catalysed reaction is GTP + AH2 + S-adenosyl-L-methionine = (8S)-3',8-cyclo-7,8-dihydroguanosine 5'-triphosphate + 5'-deoxyadenosine + L-methionine + A + H(+). The enzyme catalyses (8S)-3',8-cyclo-7,8-dihydroguanosine 5'-triphosphate = cyclic pyranopterin phosphate + diphosphate. The protein operates within cofactor biosynthesis; molybdopterin biosynthesis. Functionally, isoform MOCS1A and isoform MOCS1B probably form a complex that catalyzes the conversion of 5'-GTP to cyclic pyranopterin monophosphate (cPMP). MOCS1A catalyzes the cyclization of GTP to (8S)-3',8-cyclo-7,8-dihydroguanosine 5'-triphosphate and MOCS1B catalyzes the subsequent conversion of (8S)-3',8-cyclo-7,8-dihydroguanosine 5'-triphosphate to cPMP. The polypeptide is Molybdenum cofactor biosynthesis protein 1 (MOCS1) (Homo sapiens (Human)).